The sequence spans 400 residues: Keratin, type I cytoskeletal 19 (400 aa).

The segment at 1 to 79 (MTSYSYRQSS…TASDGLLAGN (79 aa)) is head. The residue at position 7 (Arg-7) is an Omega-N-methylarginine. Phosphoserine occurs at positions 14 and 22. Arg-24 bears the Asymmetric dimethylarginine; alternate mark. Arg-24 bears the Omega-N-methylarginine; alternate mark. Arg-32 bears the Omega-N-methylarginine mark. A phosphoserine mark is found at Ser-35 and Ser-40. Omega-N-methylarginine is present on residues Arg-43 and Arg-51. 2 positions are modified to phosphoserine: Ser-57 and Ser-72. The interval 80–115 (EKLTMQNLNDRLASYLDKVRALEAANGELEVKIRDW) is coil 1A. The IF rod domain occupies 80 to 391 (EKLTMQNLND…SLLEGQEDHY (312 aa)). Residues 116–133 (YQKQGPGPSRDYSHYYTT) are linker 1. Positions 134-225 (IQDLRDKILG…KNHEEEISTL (92 aa)) are coil 1B. Positions 226–248 (RGQVGGQVSVEVDSAPGTDLAKI) are linker 12. Positions 244–390 (DLAKILSDMR…RSLLEGQEDH (147 aa)) are necessary for interaction with PNN. A coil 2 region spans residues 249–387 (LSDMRSQYEV…ATYRSLLEGQ (139 aa)). Phosphothreonine is present on Thr-323. The rod-like helical tail stretch occupies residues 388 to 400 (EDHYSNLSASKVL). Tyr-391 is modified (phosphotyrosine). Phosphoserine is present on Ser-395.

Belongs to the intermediate filament family. As to quaternary structure, heterotetramer of two type I and two type II keratins. Interacts with PNN and the actin-binding domain of DMD.

Its function is as follows. Involved in the organization of myofibers. Together with KRT8, helps to link the contractile apparatus to dystrophin at the costameres of striated muscle. This is Keratin, type I cytoskeletal 19 from Pongo abelii (Sumatran orangutan).